The chain runs to 506 residues: Beta-glucosidase 13 (506 aa).

A signal peptide spans 1–25; that stretch reads MAAAGEVVMLGGILLPLLLVVAVSG. Q49 serves as a coordination point for a beta-D-glucoside. A glycan (N-linked (GlcNAc...) asparagine) is linked at N118. Residues H153 and 198 to 199 each bind a beta-D-glucoside; that span reads NE. E199 serves as the catalytic Proton donor. Residues C219 and C226 are joined by a disulfide bond. Residue N225 is glycosylated (N-linked (GlcNAc...) asparagine). Y342 lines the a beta-D-glucoside pocket. N-linked (GlcNAc...) asparagine glycans are attached at residues N357 and N367. Residue E413 participates in a beta-D-glucoside binding. The Nucleophile role is filled by E413. An N-linked (GlcNAc...) asparagine glycan is attached at N421. A beta-D-glucoside is bound by residues W462, 469 to 470, and F478; that span reads EW.

This sequence belongs to the glycosyl hydrolase 1 family.

It catalyses the reaction Hydrolysis of terminal, non-reducing beta-D-glucosyl residues with release of beta-D-glucose.. This is Beta-glucosidase 13 (BGLU13) from Oryza sativa subsp. japonica (Rice).